A 346-amino-acid polypeptide reads, in one-letter code: Hydroxymethylglutaryl-CoA synthase (346 aa).

Asp28 is a (3S)-3-hydroxy-3-methylglutaryl-CoA binding site. The active-site Proton donor/acceptor is Glu80. (3S)-3-hydroxy-3-methylglutaryl-CoA contacts are provided by Cys112 and Thr153. Cys112 serves as the catalytic Acyl-thioester intermediate. A CoA-binding site is contributed by Arg199. (3S)-3-hydroxy-3-methylglutaryl-CoA is bound by residues Thr201 and His234. The Proton donor/acceptor role is filled by His234. Residue Lys239 participates in CoA binding. The (3S)-3-hydroxy-3-methylglutaryl-CoA site is built by Arg243, Asn266, and Ser296.

The protein belongs to the thiolase-like superfamily. Archaeal HMG-CoA synthase family. Interacts with acetoacetyl-CoA thiolase that catalyzes the precedent step in the pathway and with a DUF35 protein. The acetoacetyl-CoA thiolase/HMG-CoA synthase complex channels the intermediate via a fused CoA-binding site, which allows for efficient coupling of the endergonic thiolase reaction with the exergonic HMGCS reaction.

It carries out the reaction acetoacetyl-CoA + acetyl-CoA + H2O = (3S)-3-hydroxy-3-methylglutaryl-CoA + CoA + H(+). It functions in the pathway metabolic intermediate biosynthesis; (R)-mevalonate biosynthesis; (R)-mevalonate from acetyl-CoA: step 2/3. Functionally, catalyzes the condensation of acetyl-CoA with acetoacetyl-CoA to form 3-hydroxy-3-methylglutaryl-CoA (HMG-CoA). Functions in the mevalonate (MVA) pathway leading to isopentenyl diphosphate (IPP), a key precursor for the biosynthesis of isoprenoid compounds that are building blocks of archaeal membrane lipids. The chain is Hydroxymethylglutaryl-CoA synthase from Methanosphaera stadtmanae (strain ATCC 43021 / DSM 3091 / JCM 11832 / MCB-3).